The chain runs to 20 residues: Mu-conotoxin SIIIB (20 aa).

Residue Gln1 is modified to Pyrrolidone carboxylic acid. 3 cysteine pairs are disulfide-bonded: Cys3/Cys13, Cys4/Cys19, and Cys8/Cys20. Position 20 is a cysteine amide (Cys20).

Expressed by the venom duct.

The protein localises to the secreted. In terms of biological role, mu-conotoxins block voltage-gated sodium channels (VGSC). Potently displaces (125)I-TIIIA from native rat brain Nav1.2/SCN2A (IC(50) is 5 nM) and muscle Nav1.4/SCN4A (IC(50) is 3 nM) VGSCs. Potently and irreversibly inhibits current through Xenopus oocyte-expressed Nav1.2/SCN2A and Nav1.4/SCN4A. The polypeptide is Mu-conotoxin SIIIB (Conus striatus (Striated cone)).